The sequence spans 186 residues: Protein GrpE (186 aa).

The protein belongs to the GrpE family. Homodimer.

The protein localises to the cytoplasm. Its function is as follows. Participates actively in the response to hyperosmotic and heat shock by preventing the aggregation of stress-denatured proteins, in association with DnaK and GrpE. It is the nucleotide exchange factor for DnaK and may function as a thermosensor. Unfolded proteins bind initially to DnaJ; upon interaction with the DnaJ-bound protein, DnaK hydrolyzes its bound ATP, resulting in the formation of a stable complex. GrpE releases ADP from DnaK; ATP binding to DnaK triggers the release of the substrate protein, thus completing the reaction cycle. Several rounds of ATP-dependent interactions between DnaJ, DnaK and GrpE are required for fully efficient folding. In Novosphingobium aromaticivorans (strain ATCC 700278 / DSM 12444 / CCUG 56034 / CIP 105152 / NBRC 16084 / F199), this protein is Protein GrpE.